Consider the following 333-residue polypeptide: L-lactate dehydrogenase B chain (333 aa).

NAD(+)-binding positions include 29–57 and Arg-99; that span reads GQVG…WEDK. Positions 106, 138, and 169 each coordinate substrate. Asn-138 contributes to the NAD(+) binding site. The Proton acceptor role is filled by His-193. Thr-248 provides a ligand contact to substrate.

It belongs to the LDH/MDH superfamily. LDH family. As to quaternary structure, homotetramer.

It is found in the cytoplasm. The enzyme catalyses (S)-lactate + NAD(+) = pyruvate + NADH + H(+). It functions in the pathway fermentation; pyruvate fermentation to lactate; (S)-lactate from pyruvate: step 1/1. Its function is as follows. Interconverts simultaneously and stereospecifically pyruvate and lactate with concomitant interconversion of NADH and NAD(+). This Alligator mississippiensis (American alligator) protein is L-lactate dehydrogenase B chain (LDHB).